Consider the following 352-residue polypeptide: MSDSQPLLLRAARGESVERTPVWMMRQAGRYMKVYRDLRDRYPSFRERSENPDLSYQISMQPFEAFQPDGVILFSDILTPLPGMGIDFDIVESKGPLIQKPIRSLSQIEALQPLEPNATMPFVGEVLGRLRESVGNRAAVLGFVGAPWTLAAYVVEGKSSKNYAVIKAMAFQQPDLLHRLLNHFAESIATYLRYQIDSGAQVVQMFDSWAGQLSPADYDTFAAPYQKRVVDLVKSTHPDTPMILYISGSAGVLERMGRTGVDIISLDWTVDMADGCARLPEHLGVQGNVDPGLLFGTPEAIRERIVDAVRKARGRRHILNLGHGILPGTPEDNAKVFFETGKNVDNLIGSAA.

Residues 26–30, Asp-76, Tyr-153, Ser-208, and His-323 contribute to the substrate site; that span reads RQAGR.

The protein belongs to the uroporphyrinogen decarboxylase family. Homodimer.

The protein resides in the cytoplasm. The catalysed reaction is uroporphyrinogen III + 4 H(+) = coproporphyrinogen III + 4 CO2. It functions in the pathway porphyrin-containing compound metabolism; protoporphyrin-IX biosynthesis; coproporphyrinogen-III from 5-aminolevulinate: step 4/4. Functionally, catalyzes the decarboxylation of four acetate groups of uroporphyrinogen-III to yield coproporphyrinogen-III. The chain is Uroporphyrinogen decarboxylase from Prochlorococcus marinus (strain MIT 9303).